The sequence spans 68 residues: Beta-defensin 1 (68 aa).

The first 21 residues, 1 to 21 (MRTSYLLLFTLCLLLSEMASG), serve as a signal peptide directing secretion. Residues 22–32 (GNFLTGLGHRS) constitute a propeptide that is removed on maturation. 3 cysteine pairs are disulfide-bonded: C37-C66, C44-C59, and C49-C67.

The protein belongs to the beta-defensin family. Monomer. Homodimer.

It localises to the secreted. It is found in the membrane. Has bactericidal activity. May act as a ligand for C-C chemokine receptor CCR6. Positively regulates the sperm motility and bactericidal activity in a CCR6-dependent manner. Binds to CCR6 and triggers Ca2+ mobilization in the sperm which is important for its motility. The protein is Beta-defensin 1 (DEFB1) of Pan troglodytes (Chimpanzee).